Here is a 267-residue protein sequence, read N- to C-terminus: L-aspartate dehydrogenase (267 aa).

The NAD(+) site is built by A124 and N190. H220 is an active-site residue.

Belongs to the L-aspartate dehydrogenase family.

It carries out the reaction L-aspartate + NADP(+) + H2O = oxaloacetate + NH4(+) + NADPH + H(+). The enzyme catalyses L-aspartate + NAD(+) + H2O = oxaloacetate + NH4(+) + NADH + H(+). It participates in cofactor biosynthesis; NAD(+) biosynthesis; iminoaspartate from L-aspartate (dehydrogenase route): step 1/1. Specifically catalyzes the NAD or NADP-dependent dehydrogenation of L-aspartate to iminoaspartate. In Ralstonia pickettii (strain 12J), this protein is L-aspartate dehydrogenase.